The following is a 91-amino-acid chain: Uteroglobin (91 aa).

Positions 1 to 21 (MKLTITLALVTLALLCSPASA) are cleaved as a signal peptide.

The protein belongs to the secretoglobin family. In terms of assembly, antiparallel homodimer; disulfide-linked. Interaction with LMBR1L is controversial.

It localises to the secreted. Its function is as follows. Uteroglobin binds progesterone specifically and with high affinity. It may regulate progesterone concentrations reaching the blastocyst. It is also a potent inhibitor of phospholipase A2. The sequence is that of Uteroglobin (SCGB1A1) from Lepus capensis (Brown hare).